The primary structure comprises 177 residues: Translation initiation factor IF-3 (177 aa).

This sequence belongs to the IF-3 family. In terms of assembly, monomer.

Its subcellular location is the cytoplasm. Functionally, IF-3 binds to the 30S ribosomal subunit and shifts the equilibrium between 70S ribosomes and their 50S and 30S subunits in favor of the free subunits, thus enhancing the availability of 30S subunits on which protein synthesis initiation begins. This is Translation initiation factor IF-3 from Synechocystis sp. (strain ATCC 27184 / PCC 6803 / Kazusa).